We begin with the raw amino-acid sequence, 316 residues long: MSFVSDSNTAIDQAAISIASPADYLALMKPRVMSLVIFTALTGVLIAPTHVNPIIGFASLLAIAAGAGASGALNMWYDSDIDAIMRRTQKRPIPAGRVARESALAFGMVLALLSVITLGFVANWAAAALLAFTIFFYVVIYTMWLKRSTPQNIVIGGAAGAFPPIVAYLAVAGQVSLPALALFAIIFVWTPPHFWALALVKAGDFERAGIPMLPNVKGPDRTRRDILLYTLLLAPIGMTPYFIGFASPAYGLLSFGLGGVMILHAVRVYLAREGDQANRVAMRMFGFSILYLFLLFAAIVAERILALLPISSATPW.

9 helical membrane-spanning segments follow: residues 32-52 (VMSL…THVN), 53-73 (PIIG…SGAL), 98-118 (VARE…VITL), 120-140 (FVAN…YVVI), 153-173 (IVIG…AVAG), 180-200 (LALF…LALV), 226-246 (ILLY…IGFA), 251-271 (GLLS…VYLA), and 280-300 (VAMR…AAIV).

It belongs to the UbiA prenyltransferase family. Protoheme IX farnesyltransferase subfamily.

The protein resides in the cell inner membrane. It carries out the reaction heme b + (2E,6E)-farnesyl diphosphate + H2O = Fe(II)-heme o + diphosphate. The protein operates within porphyrin-containing compound metabolism; heme O biosynthesis; heme O from protoheme: step 1/1. Converts heme B (protoheme IX) to heme O by substitution of the vinyl group on carbon 2 of heme B porphyrin ring with a hydroxyethyl farnesyl side group. This is Protoheme IX farnesyltransferase from Methylocella silvestris (strain DSM 15510 / CIP 108128 / LMG 27833 / NCIMB 13906 / BL2).